We begin with the raw amino-acid sequence, 328 residues long: Formimidoylglutamase (328 aa).

Positions 133, 159, 161, 163, 253, and 255 each coordinate Mn(2+).

It belongs to the arginase family. Mn(2+) serves as cofactor.

It carries out the reaction N-formimidoyl-L-glutamate + H2O = formamide + L-glutamate. It participates in amino-acid degradation; L-histidine degradation into L-glutamate; L-glutamate from N-formimidoyl-L-glutamate (hydrolase route): step 1/1. Its function is as follows. Catalyzes the conversion of N-formimidoyl-L-glutamate to L-glutamate and formamide. The sequence is that of Formimidoylglutamase from Streptococcus pyogenes serotype M28 (strain MGAS6180).